We begin with the raw amino-acid sequence, 278 residues long: Poly(3-hydroxyoctanoate) depolymerase (278 aa).

An N-terminal signal peptide occupies residues M1–L33.

The protein localises to the secreted. It carries out the reaction Hydrolyzes the polyester poly{oxycarbonyl[(R)-2-pentylethylene]} to oligomers.. In terms of biological role, hydrolysis of poly(3-hydroxyoctanoic acid). In Pseudomonas fluorescens, this protein is Poly(3-hydroxyoctanoate) depolymerase (phaZ).